The following is a 128-amino-acid chain: MRNESERRAAARRRAEHRGRDAERRVAGWYAAQGFVVLAQRLRTAAGELDLVVADRTTLVFVEVKARNALRSAIESVAPRQRRRLVAAAAIVLAGQPDWGRAETRFDVVLLVGDDVHAIRDAFRADDP.

Belongs to the UPF0102 family.

The sequence is that of UPF0102 protein Acry_2261 from Acidiphilium cryptum (strain JF-5).